The chain runs to 622 residues: Threonine--tRNA ligase (622 aa).

Residues 1-136 (MKTLLIHSDY…PLSELSRKIT (136 aa)) form an editing domain region. The interval 199–498 (PHVKYIKEKE…TLENKPPALP (300 aa)) is catalytic. Zn(2+) is bound by residues cysteine 291, histidine 343, and histidine 467.

It belongs to the class-II aminoacyl-tRNA synthetase family. Homodimer. It depends on Zn(2+) as a cofactor.

The protein resides in the cytoplasm. The enzyme catalyses tRNA(Thr) + L-threonine + ATP = L-threonyl-tRNA(Thr) + AMP + diphosphate + H(+). In terms of biological role, catalyzes the attachment of threonine to tRNA(Thr) in a two-step reaction: L-threonine is first activated by ATP to form Thr-AMP and then transferred to the acceptor end of tRNA(Thr). Also edits incorrectly charged L-seryl-tRNA(Thr). The protein is Threonine--tRNA ligase of Methanococcus maripaludis (strain DSM 14266 / JCM 13030 / NBRC 101832 / S2 / LL).